The chain runs to 302 residues: Tyrosine recombinase XerC (302 aa).

In terms of domain architecture, Core-binding (CB) spans 2 to 89 (QPLMEQIRAF…AIRSFYRHLL (88 aa)). One can recognise a Tyr recombinase domain in the interval 110–289 (RLPFHLDIDQ…SLDRLMEVYD (180 aa)). Active-site residues include R150, K174, H241, R244, and H267. Y276 serves as the catalytic O-(3'-phospho-DNA)-tyrosine intermediate.

This sequence belongs to the 'phage' integrase family. XerC subfamily. In terms of assembly, forms a cyclic heterotetrameric complex composed of two molecules of XerC and two molecules of XerD.

It localises to the cytoplasm. Its function is as follows. Site-specific tyrosine recombinase, which acts by catalyzing the cutting and rejoining of the recombining DNA molecules. The XerC-XerD complex is essential to convert dimers of the bacterial chromosome into monomers to permit their segregation at cell division. It also contributes to the segregational stability of plasmids. This Pelobacter propionicus (strain DSM 2379 / NBRC 103807 / OttBd1) protein is Tyrosine recombinase XerC.